The following is a 454-amino-acid chain: tRNA modification GTPase MnmE (454 aa).

(6S)-5-formyl-5,6,7,8-tetrahydrofolate-binding residues include Arg-23, Glu-80, and Lys-120. A TrmE-type G domain is found at 216-377 (GMKVVIAGRP…LRNHLKQSMG (162 aa)). Asn-226 is a K(+) binding site. GTP-binding positions include 226–231 (NAGKSS), 245–251 (TDIAGTT), 270–273 (DTAG), 335–338 (NKAD), and 358–360 (SAR). Position 230 (Ser-230) interacts with Mg(2+). The K(+) site is built by Thr-245, Ile-247, and Thr-250. Thr-251 contacts Mg(2+). Position 454 (Lys-454) interacts with (6S)-5-formyl-5,6,7,8-tetrahydrofolate.

This sequence belongs to the TRAFAC class TrmE-Era-EngA-EngB-Septin-like GTPase superfamily. TrmE GTPase family. As to quaternary structure, homodimer. Heterotetramer of two MnmE and two MnmG subunits. K(+) is required as a cofactor.

It localises to the cytoplasm. Exhibits a very high intrinsic GTPase hydrolysis rate. Involved in the addition of a carboxymethylaminomethyl (cmnm) group at the wobble position (U34) of certain tRNAs, forming tRNA-cmnm(5)s(2)U34. The sequence is that of tRNA modification GTPase MnmE from Salmonella paratyphi C (strain RKS4594).